A 506-amino-acid chain; its full sequence is DEAD-box ATP-dependent RNA helicase CshA (506 aa).

Positions 2–30 (QNFKELGISDNTVQSLESMGFKEPTPIQK) match the Q motif motif. One can recognise a Helicase ATP-binding domain in the interval 33 to 203 (IPYALQGIDI…QQFMKSPKII (171 aa)). An ATP-binding site is contributed by 46 to 53 (AQTGTGKT). The DEAD box signature appears at 150–153 (DEAD). Positions 214-375 (QIEEFYTIVK…LRPPHRKEVL (162 aa)) constitute a Helicase C-terminal domain. Positions 436 to 506 (EKPLSRKGRN…KGRTFADHQK (71 aa)) are disordered. Positions 468–480 (KRSKGYSSKKKST) are enriched in basic residues.

The protein belongs to the DEAD box helicase family. CshA subfamily. In terms of assembly, oligomerizes, may be a member of the RNA degradosome.

It is found in the cytoplasm. The catalysed reaction is ATP + H2O = ADP + phosphate + H(+). DEAD-box RNA helicase possibly involved in RNA degradation. Unwinds dsRNA in both 5'- and 3'-directions, has RNA-dependent ATPase activity. The chain is DEAD-box ATP-dependent RNA helicase CshA from Staphylococcus aureus (strain bovine RF122 / ET3-1).